The primary structure comprises 90 residues: Secretoglobin family 1D member 2 (90 aa).

A signal peptide spans 1-21; it reads MKLSVCLLLVTLALCCYQANA.

It belongs to the secretoglobin family. Lipophilin subfamily. Highest expression was found in skeletal muscle. Expressed as well in thymus, trachea, kidney, steroid responsive tissues (prostate, testis, uterus, breast and ovary) and salivary gland.

The protein resides in the secreted. May bind androgens and other steroids, may also bind estramustine, a chemotherapeutic agent used for prostate cancer. May be under transcriptional regulation of steroid hormones. This is Secretoglobin family 1D member 2 (SCGB1D2) from Homo sapiens (Human).